The following is a 425-amino-acid chain: Enolase (425 aa).

Q162 provides a ligand contact to (2R)-2-phosphoglycerate. E204 serves as the catalytic Proton donor. Positions 241, 282, and 309 each coordinate Mg(2+). The (2R)-2-phosphoglycerate site is built by K334, R363, S364, and K385. K334 serves as the catalytic Proton acceptor.

This sequence belongs to the enolase family. Mg(2+) is required as a cofactor.

Its subcellular location is the cytoplasm. It localises to the secreted. The protein resides in the cell surface. The enzyme catalyses (2R)-2-phosphoglycerate = phosphoenolpyruvate + H2O. The protein operates within carbohydrate degradation; glycolysis; pyruvate from D-glyceraldehyde 3-phosphate: step 4/5. Catalyzes the reversible conversion of 2-phosphoglycerate (2-PG) into phosphoenolpyruvate (PEP). It is essential for the degradation of carbohydrates via glycolysis. In Corynebacterium glutamicum (strain R), this protein is Enolase.